A 234-amino-acid chain; its full sequence is Multicopy suppressor of SEC21 protein 27 (234 aa).

Topologically, residues 1–47 are cytoplasmic; sequence MQTPLESTDVKLDTLNEPSAHLIEKNVALPKDIFRSYLSYWIYEIAR. T3 is subject to Phosphothreonine. The chain crosses the membrane as a helical span at residues 48 to 68; that stretch reads YTPVMILSLVIGVLVLLIIFF. The Extracellular segment spans residues 69-72; the sequence is NDNE. Residues 73–93 form a helical membrane-spanning segment; that stretch reads ACVFNSAYYAYLSLVVLLIIL. Residues 94–234 lie on the Cytoplasmic side of the membrane; it reads GDGNPKLVSR…NIDALLKKTE (141 aa). The interval 231–234 is COPI binding; the sequence is KKTE.

Belongs to the DUP/COS family. Interacts with MST28. Binds to coatomer proteins of COPI and SEC23/SEC24 of COPII coated vesicles.

The protein localises to the endoplasmic reticulum. Its subcellular location is the golgi apparatus. The protein resides in the cytoplasmic vesicle. It localises to the COPI-coated vesicle membrane. It is found in the COPII-coated vesicle membrane. In terms of biological role, involved in protein trafficking vesicle formation, probably by stabilizing of coatomer at the Golgi membrane and thus allowing the efficient formation of COPI coated vesicles. The sequence is that of Multicopy suppressor of SEC21 protein 27 (MST27) from Saccharomyces cerevisiae (strain ATCC 204508 / S288c) (Baker's yeast).